A 62-amino-acid polypeptide reads, in one-letter code: UPF0434 protein RHECIAT_CH0004260 (62 aa).

The protein belongs to the UPF0434 family.

This is UPF0434 protein RHECIAT_CH0004260 from Rhizobium etli (strain CIAT 652).